A 255-amino-acid polypeptide reads, in one-letter code: MAVTISIKEKAFVQEGRKNTVLENIELSIAPGEFLTLIGPSGCGKSTLLKIIAGLDSEYDGSVEINGRSVTAPGIQQGFIFQEHRLFPWLTVEQNIAADLNLKDPKVKQKVDELIEIVRLKGSEKAYPRELSGGMSQRVAIARALLREPEVLLLDEPFGALDAFTRKHLQDVLLDIWRKKKTTMILVTHDIDESVYLGNELAILKAKPGKIHKLMPIHLAYPRNRTTPDFQAIRQRVLSEFEKTEDLEYAEGSGI.

Residues 7–231 form the ABC transporter domain; the sequence is IKEKAFVQEG…PRNRTTPDFQ (225 aa). 39–46 serves as a coordination point for ATP; that stretch reads GPSGCGKS.

Belongs to the ABC transporter superfamily. Aliphatic sulfonates importer (TC 3.A.1.17.2) family. In terms of assembly, the complex is composed of two ATP-binding proteins (SsuB), two transmembrane proteins (SsuC) and a solute-binding protein (SsuA).

The protein localises to the cell membrane. It catalyses the reaction ATP + H2O + aliphatic sulfonate-[sulfonate-binding protein]Side 1 = ADP + phosphate + aliphatic sulfonateSide 2 + [sulfonate-binding protein]Side 1.. Part of the ABC transporter complex SsuABC involved in aliphatic sulfonates import. Responsible for energy coupling to the transport system. Is also involved in taurine transport. The polypeptide is Aliphatic sulfonates import ATP-binding protein SsuB (Bacillus subtilis (strain 168)).